The following is a 905-amino-acid chain: Gamma-tubulin complex component 2 (905 aa).

Tyrosine 83 carries the post-translational modification Phosphotyrosine. The segment at alanine 877–glutamine 905 is disordered. Pro residues predominate over residues valine 887–proline 896.

It belongs to the TUBGCP family. In terms of assembly, component of the gamma-tubulin ring complex (gTuRC) consisting of TUBGCP2, TUBGCP3, TUBGCP4, TUBGCP5 and TUBGCP6 and gamma-tubulin TUBG1 or TUBG2. TUBGCP2, TUBGCP3, TUBGCP4, TUBGCP5 and TUBGCP6 assemble in a 5:5:2:1:1 stoichiometry; each is associated with a gamma-tubulin, thereby arranging 14 gamma-tubulins in a helical manner. Gamma-tubulin at the first position is blocked by TUBGCP3 at the last position, allowing 13 protafilaments to grow into a microtubule. The gTuRC (via TUBGCP3 and TUBGCP6) interacts with ACTB and MZT1; the interactions form a luminal bridge that stabilizes the initial structure during complex assembly. The gTuRC (via TUBGCP2) interacts with MZT2A/MZT2B and CDK5RAP2 (via CM1 motif); the interactions play a role in gTuRC activation. Interacts with ATF5; the ATF5:PCNT:polyglutamylated tubulin (PGT) tripartite unites the mother centriole and the pericentriolar material (PCM) in the centrosome.

It localises to the cytoplasm. It is found in the cytoskeleton. The protein localises to the microtubule organizing center. Its subcellular location is the centrosome. Component of the gamma-tubulin ring complex (gTuRC) which mediates microtubule nucleation. The gTuRC regulates the minus-end nucleation of alpha-beta tubulin heterodimers that grow into microtubule protafilaments, a critical step in centrosome duplication and spindle formation. Plays a role in neuronal migration. This is Gamma-tubulin complex component 2 (Tubgcp2) from Mus musculus (Mouse).